A 102-amino-acid chain; its full sequence is Ferredoxin, 2Fe-2S (102 aa).

Residues Cys-11, Cys-24, Cys-56, and Cys-60 each coordinate [2Fe-2S] cluster.

Belongs to the 2Fe2S Shethna-type ferredoxin family. [2Fe-2S] cluster serves as cofactor.

Its function is as follows. Ferredoxins are iron-sulfur proteins that transfer electrons in a wide variety of metabolic reactions. This is Ferredoxin, 2Fe-2S from Clostridium pasteurianum.